Here is a 331-residue protein sequence, read N- to C-terminus: Pantothenate kinase (331 aa).

109-116 (GSVAVGKS) lines the ATP pocket.

The protein belongs to the prokaryotic pantothenate kinase family.

The protein resides in the cytoplasm. It carries out the reaction (R)-pantothenate + ATP = (R)-4'-phosphopantothenate + ADP + H(+). It functions in the pathway cofactor biosynthesis; coenzyme A biosynthesis; CoA from (R)-pantothenate: step 1/5. In Rhizobium etli (strain CIAT 652), this protein is Pantothenate kinase.